The primary structure comprises 206 residues: Probable glutathione S-transferase 9 (206 aa).

One can recognise a GST N-terminal domain in the interval 2 to 79; it reads VSYKLIYFQS…YLSKQFGISG (78 aa). Residues Tyr8, Trp39, Lys43, 49–51, and 63–64 each bind glutathione; these read GQV and QS. A GST C-terminal domain is found at 81-206; the sequence is SSWEEAQVDA…WIEKRPVTSR (126 aa).

The protein belongs to the GST superfamily. Sigma family.

The catalysed reaction is RX + glutathione = an S-substituted glutathione + a halide anion + H(+). In terms of biological role, conjugation of reduced glutathione to a wide number of exogenous and endogenous hydrophobic electrophiles. The chain is Probable glutathione S-transferase 9 (gst-9) from Caenorhabditis elegans.